The chain runs to 292 residues: MQFSGALTAIVTPLKNGHIDEEAYRNLIEWQIEQGINGLVPCGTTGESATLSHEEHRDVIRICIDQVKGRVPVLAGAGSNSTKEACGLAQFAKDAGADGALLITPYYNKPTQEGLYQHFKAIAAEVSMPYIMYNVPGRTGVNMTSETVARVKRDVPEVVGIKEASANLKQVSEIIEFCGPDFQVLSGDDFTVLPLLSVGGCGVISVVSNIVPAKMSGLCKAFAGGDLARAKTLHHELSPLSRAMFCETNPIPVKTALSMMGRLSLELRLPLVPMQPQNEKYLRGILSLAGLV.

Thr45 is a pyruvate binding site. Tyr133 acts as the Proton donor/acceptor in catalysis. Lys162 serves as the catalytic Schiff-base intermediate with substrate. Ile204 is a binding site for pyruvate.

This sequence belongs to the DapA family. Homotetramer; dimer of dimers.

The protein localises to the cytoplasm. It catalyses the reaction L-aspartate 4-semialdehyde + pyruvate = (2S,4S)-4-hydroxy-2,3,4,5-tetrahydrodipicolinate + H2O + H(+). Its pathway is amino-acid biosynthesis; L-lysine biosynthesis via DAP pathway; (S)-tetrahydrodipicolinate from L-aspartate: step 3/4. In terms of biological role, catalyzes the condensation of (S)-aspartate-beta-semialdehyde [(S)-ASA] and pyruvate to 4-hydroxy-tetrahydrodipicolinate (HTPA). This chain is 4-hydroxy-tetrahydrodipicolinate synthase, found in Oleidesulfovibrio alaskensis (strain ATCC BAA-1058 / DSM 17464 / G20) (Desulfovibrio alaskensis).